The primary structure comprises 3748 residues: Intermembrane lipid transfer protein VPS13C (3748 aa).

Residues 3-115 (LESVVADLLN…SLQDIKQKEL (113 aa)) form the Chorein N-terminal domain. Serine 132 is subject to Phosphoserine. Phosphothreonine is present on threonine 613. Serine 618 carries the phosphoserine modification. Threonine 623 carries the phosphothreonine modification. Serine 736, serine 841, serine 871, and serine 873 each carry phosphoserine. Positions 876–882 (EFFDAED) match the FFAT motif. At threonine 1968 the chain carries Phosphothreonine. Serine 1974 and serine 2442 each carry phosphoserine. The segment at 2410 to 3304 (DYSLKDRAPF…IQQDIDALNT (895 aa)) is required for late endosome/lysosome localization. The SHR-BD domain maps to 2760 to 3012 (ELSVFSPYWL…LFAWADPTGI (253 aa)). A required for lipid droplet localization region spans residues 3305–3748 (ELMESSMTDM…VKLLRPQGPS (444 aa)). An omega-N-methylarginine mark is found at arginine 3514 and arginine 3521. Position 3533 is an N6-acetyllysine (lysine 3533).

It belongs to the VPS13 family.

It is found in the mitochondrion outer membrane. The protein resides in the lipid droplet. Its subcellular location is the endoplasmic reticulum membrane. The protein localises to the lysosome membrane. It localises to the late endosome membrane. Functionally, mediates the transfer of lipids between membranes at organelle contact sites. Necessary for proper mitochondrial function and maintenance of mitochondrial transmembrane potential. Involved in the regulation of PINK1/PRKN-mediated mitophagy in response to mitochondrial depolarization. The polypeptide is Intermembrane lipid transfer protein VPS13C (Mus musculus (Mouse)).